The sequence spans 146 residues: Hemoglobin subunit beta-2 (146 aa).

In terms of domain architecture, Globin spans 2 to 146; the sequence is EWTDFERATI…VVSSLGRQYH (145 aa). The heme b site is built by histidine 63 and histidine 92.

It belongs to the globin family. Hb2 is a heterotetramer of two alpha chains and two beta-2 chains. As to expression, red blood cells.

Involved in oxygen transport from gills to the various peripheral tissues. The polypeptide is Hemoglobin subunit beta-2 (hbb2) (Pseudaphritis urvillii (Congolli)).